Reading from the N-terminus, the 259-residue chain is Caffeoyl-CoA O-methyltransferase (259 aa).

Residue K33 participates in substrate binding. S-adenosyl-L-methionine contacts are provided by residues T75, E97, 99–100 (GV), S105, D123, and A152. D175 contributes to the substrate binding site. A divalent metal cation is bound at residue D175. Residue D177 coordinates S-adenosyl-L-methionine. A divalent metal cation-binding residues include D201 and N202. Residue N206 participates in substrate binding.

It belongs to the class I-like SAM-binding methyltransferase superfamily. Cation-dependent O-methyltransferase family. CCoAMT subfamily. The cofactor is a divalent metal cation.

It carries out the reaction (E)-caffeoyl-CoA + S-adenosyl-L-methionine = (E)-feruloyl-CoA + S-adenosyl-L-homocysteine + H(+). Its pathway is aromatic compound metabolism; phenylpropanoid biosynthesis. Functionally, methylates caffeoyl-CoA to feruloyl-CoA and 5-hydroxyferuloyl-CoA to sinapoyl-CoA. Plays a role in the synthesis of feruloylated polysaccharides. Involved in the reinforcement of the plant cell wall. Also involved in the responding to wounding or pathogen challenge by the increased formation of cell wall-bound ferulic acid polymers. This chain is Caffeoyl-CoA O-methyltransferase (CCOAOMT), found in Pinus taeda (Loblolly pine).